Here is a 459-residue protein sequence, read N- to C-terminus: Cysteine--tRNA ligase (459 aa).

Cys-29 provides a ligand contact to Zn(2+). Residues 31–41 carry the 'HIGH' region motif; sequence MTVYDLCHLGH. Positions 213, 238, and 242 each coordinate Zn(2+). Positions 270-274 match the 'KMSKS' region motif; it reads KMSKS. Lys-273 contributes to the ATP binding site.

This sequence belongs to the class-I aminoacyl-tRNA synthetase family. Monomer. It depends on Zn(2+) as a cofactor.

The protein resides in the cytoplasm. It carries out the reaction tRNA(Cys) + L-cysteine + ATP = L-cysteinyl-tRNA(Cys) + AMP + diphosphate. In Albidiferax ferrireducens (strain ATCC BAA-621 / DSM 15236 / T118) (Rhodoferax ferrireducens), this protein is Cysteine--tRNA ligase.